The sequence spans 130 residues: Putative pre-16S rRNA nuclease (130 aa).

Belongs to the YqgF nuclease family.

The protein resides in the cytoplasm. Its function is as follows. Could be a nuclease involved in processing of the 5'-end of pre-16S rRNA. The sequence is that of Putative pre-16S rRNA nuclease from Buchnera aphidicola subsp. Cinara cedri (strain Cc).